A 39-amino-acid polypeptide reads, in one-letter code: Cygnin (39 aa).

The residue at position 1 (glutamine 1) is a Pyrrolidone carboxylic acid. 3 cysteine pairs are disulfide-bonded: cysteine 6–cysteine 33, cysteine 12–cysteine 28, and cysteine 16–cysteine 32.

It belongs to the transferrin family.

This chain is Cygnin, found in Cygnus atratus (Black swan).